Consider the following 200-residue polypeptide: Recombination protein RecR (200 aa).

The C4-type zinc finger occupies 57 to 72 (CRQCRTLTEDDLCPQC). Residues 80-175 (TLLCVVEGPM…IASRIAHGVP (96 aa)) enclose the Toprim domain.

Belongs to the RecR family.

Its function is as follows. May play a role in DNA repair. It seems to be involved in an RecBC-independent recombinational process of DNA repair. It may act with RecF and RecO. This Pseudomonas fluorescens (strain Pf0-1) protein is Recombination protein RecR.